Consider the following 746-residue polypeptide: MRQPNTQAEAQHTQPSVGSIAAHRPNTVAATVSGLEPDIDADLDAYEESEESQDGGARLPQGRFLDRERSWLAFNERVLELAEDPSTPLLERANFLAIFASNLDEFFMVRVAGLKRRIATGVATRSASGLQPREVLEMIWARSRELMARHAACFHEDVAPALAEEGIHLVRWSELAEKEQARLFTLFRHRIFPVLTPLAVDPAHPFPYISGLSLNLAVVVRNPVTGHRHFARVKVPPLLSRFLEASPGRYVPVEDVIAAHLEELFPGMEVLEHHTFRLTRNEDLEVEEDDAENLLQALEKELMRRRLGPPVRLEVEESVDREVLDLLVRELKIGEAEVYPLPGPLDLTGLFRIHSIDRPELKYPKFVAGTHRDLAEVESASAPDIFAALRTKDVLLHHPYDSFSTSVQAFLEQAAADPDVLAIKQTLYRTSGDSPIVDALIEAAESGKQVLVLVEIKARFDESANIKWARKLEESGCHVVYGLVGLKTHCKLSLVVRQEGETLRRYSHVGTGNYHPKTARLYEDLGLLTSDPQVGADLSDLFNRLSGYSRRETYRRLLVAPKSLRDGLVSRIHKEIQHHRAGRPAHVRIKVNSMVDEAVVDACYRASQAGVPVDVWVRGICALRPGVPGLSENIRVRSVLGRFLEHSRVFAFGNGGEPEVWLGSADMMHRNLDRRIEALVRVTDPAHRAALNRLLENGMSDGTASWHLGPDGEWTRHATDADGQPLRNIQEMLIDARRRRRGTATP.

Residues 1-17 (MRQPNTQAEAQHTQPSV) show a composition bias toward polar residues. The segment at 1-60 (MRQPNTQAEAQHTQPSVGSIAAHRPNTVAATVSGLEPDIDADLDAYEESEESQDGGARLP) is disordered. Acidic residues predominate over residues 37–53 (PDIDADLDAYEESEESQ). N102 contacts ATP. The Mg(2+) site is built by R429 and R459. The active-site Phosphohistidine intermediate is H489. The ATP site is built by Y522, R618, and H646.

The protein belongs to the polyphosphate kinase 1 (PPK1) family. Mg(2+) serves as cofactor. In terms of processing, an intermediate of this reaction is the autophosphorylated ppk in which a phosphate is covalently linked to a histidine residue through a N-P bond.

The enzyme catalyses [phosphate](n) + ATP = [phosphate](n+1) + ADP. Catalyzes the reversible transfer of the terminal phosphate of ATP to form a long-chain polyphosphate (polyP). This chain is Polyphosphate kinase, found in Streptomyces coelicolor (strain ATCC BAA-471 / A3(2) / M145).